A 478-amino-acid chain; its full sequence is Probable glycine dehydrogenase (decarboxylating) subunit 2 (478 aa).

Lys264 carries the post-translational modification N6-(pyridoxal phosphate)lysine.

The protein belongs to the GcvP family. C-terminal subunit subfamily. As to quaternary structure, the glycine cleavage system is composed of four proteins: P, T, L and H. In this organism, the P 'protein' is a heterodimer of two subunits. Pyridoxal 5'-phosphate is required as a cofactor.

It carries out the reaction N(6)-[(R)-lipoyl]-L-lysyl-[glycine-cleavage complex H protein] + glycine + H(+) = N(6)-[(R)-S(8)-aminomethyldihydrolipoyl]-L-lysyl-[glycine-cleavage complex H protein] + CO2. The glycine cleavage system catalyzes the degradation of glycine. The P protein binds the alpha-amino group of glycine through its pyridoxal phosphate cofactor; CO(2) is released and the remaining methylamine moiety is then transferred to the lipoamide cofactor of the H protein. The sequence is that of Probable glycine dehydrogenase (decarboxylating) subunit 2 from Endomicrobium trichonymphae.